A 358-amino-acid chain; its full sequence is Protein-glutamate methylesterase/protein-glutamine glutaminase 1 (358 aa).

One can recognise a Response regulatory domain in the interval 8–125 (RVLIVDDSAV…ARGLEGYAEE (118 aa)). Asp-59 bears the 4-aspartylphosphate mark. In terms of domain architecture, CheB-type methylesterase spans 157-352 (PVPGSALRFR…LERVAERLIA (196 aa)). Active-site residues include Ser-177, His-203, and Asp-299.

Belongs to the CheB family. Phosphorylated by CheA. Phosphorylation of the N-terminal regulatory domain activates the methylesterase activity.

Its subcellular location is the cytoplasm. The catalysed reaction is [protein]-L-glutamate 5-O-methyl ester + H2O = L-glutamyl-[protein] + methanol + H(+). It catalyses the reaction L-glutaminyl-[protein] + H2O = L-glutamyl-[protein] + NH4(+). Involved in chemotaxis. Part of a chemotaxis signal transduction system that modulates chemotaxis in response to various stimuli. Catalyzes the demethylation of specific methylglutamate residues introduced into the chemoreceptors (methyl-accepting chemotaxis proteins or MCP) by CheR. Also mediates the irreversible deamidation of specific glutamine residues to glutamic acid. This is Protein-glutamate methylesterase/protein-glutamine glutaminase 1 from Xanthomonas campestris pv. campestris (strain ATCC 33913 / DSM 3586 / NCPPB 528 / LMG 568 / P 25).